The primary structure comprises 351 residues: S-adenosylmethionine:tRNA ribosyltransferase-isomerase (351 aa).

It belongs to the QueA family. Monomer.

The protein localises to the cytoplasm. The enzyme catalyses 7-aminomethyl-7-carbaguanosine(34) in tRNA + S-adenosyl-L-methionine = epoxyqueuosine(34) in tRNA + adenine + L-methionine + 2 H(+). The protein operates within tRNA modification; tRNA-queuosine biosynthesis. Its function is as follows. Transfers and isomerizes the ribose moiety from AdoMet to the 7-aminomethyl group of 7-deazaguanine (preQ1-tRNA) to give epoxyqueuosine (oQ-tRNA). This is S-adenosylmethionine:tRNA ribosyltransferase-isomerase from Roseobacter denitrificans (strain ATCC 33942 / OCh 114) (Erythrobacter sp. (strain OCh 114)).